The chain runs to 366 residues: G kinase-anchoring protein 1 (366 aa).

The interval 1 to 95 (MASAVLSSVL…SHSVCNVQHE (95 aa)) is interaction with IRS1. The interval 20 to 105 (QVDSGSGSDS…LSLPNPVQKE (86 aa)) is disordered. Ser-23, Ser-25, and Ser-27 each carry phosphoserine. A compositionally biased stretch (polar residues) spans 39–50 (NGKSQTLGNKST). A coiled-coil region spans residues 46 to 77 (GNKSTANEKKREKRRKKKEQQQSEANELRNLA). Ser-106 carries the phosphoserine; by PKG modification. Coiled-coil stretches lie at residues 129–160 (DLEK…QTKV), 250–299 (LKDG…MLQE), and 326–353 (VSSL…YQGG).

Belongs to the GKAP1 family. Interacts with PRKG1 and IRS1.

The protein localises to the golgi apparatus. Regulates insulin-dependent IRS1 tyrosine phosphorylation in adipocytes by modulating the availability of IRS1 to IR tyrosine kinase. Its association with IRS1 is required for insulin-induced translocation of SLC2A4 to the cell membrane. Involved in TNF-induced impairment of insulin-dependent IRS1 tyrosine phosphorylation. The chain is G kinase-anchoring protein 1 (Gkap1) from Rattus norvegicus (Rat).